Reading from the N-terminus, the 446-residue chain is MSQILTGRQAEELHKSLIAYLSSINASQSVTTLREELQIGDNFTDAACKKYEGFLEKKWISVVRLQKRILDLESKIASLQAELDSAPTITSRANRDPKSWLPGTSPTHTLGSHRGAITCVAFHPVFSSLASGSEDYSIKIWDWELGELERTLKGHTRTVTGLDFGGQKGRTLLASCSNDLTIKLWDPSNDYANIRTLFGHDHSVSSVRFLIPGGNILISASRDTTLRMWDTSTGFCVKTIHTQGDWVRDVFPSFDGKWLVSGGRDQAATIWEVSSGEARASLLGHENYIECCTFAPPSSYGYLATLAGLKKPPSTNSSAEFVATGARDKTVKLWDSRGSLIKTLIGHNNWVRGLVFHPGGKYLFSVGDDKTIRCWDLSQEGKLVKTLEGAHEHFVSCIQWAPDPANLVQSSVAERPEGNKGTEHGTTGFRCVIATGSADSCVRVFM.

A LisH domain is found at 9–41 (QAEELHKSLIAYLSSINASQSVTTLREELQIGD). A coiled-coil region spans residues 60–86 (ISVVRLQKRILDLESKIASLQAELDSA). WD repeat units follow at residues 112–153 (SHRG…RTLK), 155–195 (HTRT…ANIR), 199–239 (GHDH…CVKT), 242–281 (TQGD…ARAS), 284–344 (GHEN…IKTL), 346–385 (GHNN…KLVK), 390–430 (AHEH…TGFR), and 432–446 (VIAT…RVFM).

It belongs to the WD repeat LIS1/nudF family. As to quaternary structure, self-associates. Interacts with NDL1 and dynein.

The protein resides in the cytoplasm. Its subcellular location is the cytoskeleton. It localises to the spindle pole. Positively regulates the activity of the minus-end directed microtubule motor protein dynein. May enhance dynein-mediated microtubule sliding by targeting dynein to the microtubule plus end. Required for nuclear migration during vegetative growth as well as development. Required for retrograde early endosome (EE) transport from the hyphal tip. Required for localization of dynein to the mitotic spindle poles. Recruits additional proteins to the dynein complex at SPBs. The chain is Nuclear distribution protein PAC1-1 from Uncinocarpus reesii (strain UAMH 1704).